The chain runs to 1170 residues: PAN2-PAN3 deadenylation complex catalytic subunit PAN2 (1170 aa).

WD repeat units lie at residues 104–144 (ENMK…IIKQ) and 280–319 (NISSYVKLFEIAPSGEALVIGDADCNIHLWGSPTKIHFTD). Residues 319-458 (DMAIPIELPE…DPNEIESLKP (140 aa)) form a linker region. A disordered region spans residues 399–459 (RRNQVEDTRN…PNEIESLKPE (61 aa)). Positions 443–452 (VDQEPEDPNE) are enriched in acidic residues. In terms of domain architecture, USP spans 459 to 846 (EAPPLYRNLE…MPAVLLFQIK (388 aa)). Positions 894-1067 (VALDTEFVSL…EDARTALKLY (174 aa)) constitute an Exonuclease domain. 4 residues coordinate a divalent metal cation: Asp-897, Glu-899, Asp-1006, and Asp-1059. A disordered region spans residues 1094 to 1170 (NFKPPRREDR…PSKASSPLPK (77 aa)). Residues 1098–1108 (PRREDREKELQ) are compositionally biased toward basic and acidic residues. A compositionally biased stretch (polar residues) spans 1109 to 1119 (RQSTPPNSTAP).

This sequence belongs to the peptidase C19 family. PAN2 subfamily. Forms a heterotrimer with an asymmetric homodimer of the regulatory subunit PAN3 to form the poly(A)-nuclease (PAN) deadenylation complex. The cofactor is a divalent metal cation.

The protein localises to the cytoplasm. The catalysed reaction is Exonucleolytic cleavage of poly(A) to 5'-AMP.. Positively regulated by the regulatory subunit PAN3. Functionally, catalytic subunit of the poly(A)-nuclease (PAN) deadenylation complex, one of two cytoplasmic mRNA deadenylases involved in mRNA turnover. PAN specifically shortens poly(A) tails of RNA and the activity is stimulated by poly(A)-binding protein PAB1. PAN deadenylation is followed by rapid degradation of the shortened mRNA tails by the CCR4-NOT complex. Deadenylated mRNAs are then degraded by two alternative mechanisms, namely exosome-mediated 3'-5' exonucleolytic degradation, or deadenylation-dependent mRNA decaping and subsequent 5'-3' exonucleolytic degradation by XRN1. May also be involved in post-transcriptional maturation of mRNA poly(A) tails. The protein is PAN2-PAN3 deadenylation complex catalytic subunit PAN2 of Chaetomium thermophilum (strain DSM 1495 / CBS 144.50 / IMI 039719) (Thermochaetoides thermophila).